Reading from the N-terminus, the 946-residue chain is Bifunctional glutamine synthetase adenylyltransferase/adenylyl-removing enzyme (946 aa).

An adenylyl removase region spans residues 1–440 (MKPLSSPLQQ…VFNELIGDDE (440 aa)). Residues 449–946 (SEQWRELWQD…ASWQKWLVEE (498 aa)) form an adenylyl transferase region.

The protein belongs to the GlnE family. The cofactor is Mg(2+).

It catalyses the reaction [glutamine synthetase]-O(4)-(5'-adenylyl)-L-tyrosine + phosphate = [glutamine synthetase]-L-tyrosine + ADP. It carries out the reaction [glutamine synthetase]-L-tyrosine + ATP = [glutamine synthetase]-O(4)-(5'-adenylyl)-L-tyrosine + diphosphate. Involved in the regulation of glutamine synthetase GlnA, a key enzyme in the process to assimilate ammonia. When cellular nitrogen levels are high, the C-terminal adenylyl transferase (AT) inactivates GlnA by covalent transfer of an adenylyl group from ATP to specific tyrosine residue of GlnA, thus reducing its activity. Conversely, when nitrogen levels are low, the N-terminal adenylyl removase (AR) activates GlnA by removing the adenylyl group by phosphorolysis, increasing its activity. The regulatory region of GlnE binds the signal transduction protein PII (GlnB) which indicates the nitrogen status of the cell. This chain is Bifunctional glutamine synthetase adenylyltransferase/adenylyl-removing enzyme, found in Escherichia coli O8 (strain IAI1).